A 40-amino-acid polypeptide reads, in one-letter code: MLNLLVITLPILAAIGWVTLNIQKPAREQWDRQFGDNKPF.

A helical transmembrane segment spans residues 4-22; it reads LLVITLPILAAIGWVTLNI.

Belongs to the PsbY family. As to quaternary structure, PSII is composed of 1 copy each of membrane proteins PsbA, PsbB, PsbC, PsbD, PsbE, PsbF, PsbH, PsbI, PsbJ, PsbK, PsbL, PsbM, PsbT, PsbX, PsbY, Psb30/Ycf12, peripheral proteins PsbO, CyanoQ (PsbQ), PsbU, PsbV and a large number of cofactors. It forms dimeric complexes.

The protein resides in the cellular thylakoid membrane. Its function is as follows. Loosely associated component of the core of photosystem II (PSII), it is not always seen in crystals. PSII is a light-driven water plastoquinone oxidoreductase, using light energy to abstract electrons from H(2)O, generating a proton gradient subsequently used for ATP formation. The polypeptide is Photosystem II reaction center protein Y (Prochlorococcus marinus (strain SARG / CCMP1375 / SS120)).